The primary structure comprises 736 residues: 1,4-alpha-glucan branching enzyme GlgB (736 aa).

Residue aspartate 415 is the Nucleophile of the active site. The active-site Proton donor is glutamate 470.

Belongs to the glycosyl hydrolase 13 family. GlgB subfamily. In terms of assembly, monomer.

The enzyme catalyses Transfers a segment of a (1-&gt;4)-alpha-D-glucan chain to a primary hydroxy group in a similar glucan chain.. It participates in glycan biosynthesis; glycogen biosynthesis. Its function is as follows. Catalyzes the formation of the alpha-1,6-glucosidic linkages in glycogen by scission of a 1,4-alpha-linked oligosaccharide from growing alpha-1,4-glucan chains and the subsequent attachment of the oligosaccharide to the alpha-1,6 position. The sequence is that of 1,4-alpha-glucan branching enzyme GlgB from Burkholderia cenocepacia (strain HI2424).